The sequence spans 990 residues: MKNNLRYGIRKHKLGAASVFLGTMIVVGMGQDKEAATSEQKTTTVEENGNSATDNKVSETQTTTTNVNTIDETQSYSATATEQPSNATQVITEEAPKAVQAPQTAQPANLETVKEEVVKEEEKPQVKETTQSQDNSGDQRQVDLTPKKATQNQAAETQVEVAQPRTVSESKPRVTRSADVAEAKEASDVTEVKGTDVTSKVTVTESSIEGHNNTNKVEPHAGQRAVLKYKLKFEDGLHQGDYFDFTLSNNVNTHGVSTARKVPEIKNGSVVMATGKILEDGKIRYTFTNDVEHKVEVTANLEINLFIDPKTFQSNGEEKVTSSLNGSKTEKNLQIEYKNGVGTYYANVNGSIETFDKEKNKFTHVAYVKPLNQFKLGTVTVSGTVTQGSNPNGEKPTVKIYEVTNDGKDLPQSVYLDASDKNKYKDVTNEMQSKLTVQENGNYTLNLDTLDKSYVIHYSGEYLNGTNEVNFRTQMFGYPEQRYGYYYNSYQLTWDNGLVLYSNKADGNGKNGQIIQNNDFEYKEDTLTETVTGQYDEKQIIETEENQDNTPLDIDYHTAIDGEGGYADGYIETIEETDSSAIDIDYHTAVDSEAGHVGGYTESSEESNPIDFEESTKGIVTGAVSDHTTVEDTKEYTTESNLIELVDELPEEHGQAQGPIEEITENNHHISHSGLGTENGHGNYGVIEEIEENSHVDIKSELGYEGGQNSGNQSFEEDTEEDKPKYEQGGNIVDIDFDSVPQIQGQNNGNQSFEEDTEKDKPKYEQGGNIIDIDFDSVPQIHGFNKHNEIIEEDTNKDKPNYQFGGHNSVDFEEDTLPKVSGQNEGQQTIEEDTTPPTPPTPEVPSEPETPTPPTPEVPSEPETPTPPTPEVPSEPETPTPPTPEVPSEPETPTPPTPEVPAEPGKPVPPAEEEPKKPSKPVEQGKVVTPVIEINEKVKAVAPTKQKQSKKSELPETGGEESTNKGMLFGGLFSILGLALLRRNKKNHKA.

The signal sequence occupies residues 1-35; the sequence is MKNNLRYGIRKHKLGAASVFLGTMIVVGMGQDKEA. The YSIRK-G/S signaling motif signature appears at 7–18; that stretch reads YGIRKHKLGAAS. Disordered regions lie at residues 33–61 and 96–193; these read KEAA…SETQ and PKAV…TEVK. The span at 37-55 shows a compositional bias: polar residues; sequence TSEQKTTTVEENGNSATDN. A ligand-binding A region region spans residues 37-511; the sequence is TSEQKTTTVE…SNKADGNGKN (475 aa). 2 stretches are compositionally biased toward basic and acidic residues: residues 112–126 and 179–193; these read TVKE…KPQV and DVAE…TEVK. The fibrinogen/elastin/tropoelastin-binding stretch occupies residues 194 to 511; sequence GTDVTSKVTV…SNKADGNGKN (318 aa). The fibronectin-binding stretch occupies residues 512–834; that stretch reads GQIIQNNDFE…EGQQTIEEDT (323 aa). The stretch at 545–574 is one B-1 repeat; that stretch reads ENQDNTPLDIDYHTAIDGEGGYADGYIETI. Residues 545-604 are 2 X approximate tandem repeats; it reads ENQDNTPLDIDYHTAIDGEGGYADGYIETIEETDSSAIDIDYHTAVDSEAGHVGGYTESS. The stretch at 575–604 is one B-2 repeat; that stretch reads EETDSSAIDIDYHTAVDSEAGHVGGYTESS. The interval 702–969 is disordered; the sequence is LGYEGGQNSG…EESTNKGMLF (268 aa). One copy of the D-1 repeat lies at 707-744; sequence GQNSGNQSFEEDTEEDKPKYEQGGNIVDIDFDSVPQIQ. The interval 707-850 is 4 X approximate tandem repeats; sequence GQNSGNQSFE…TPEVPSEPET (144 aa). Over residues 741 to 752 the composition is skewed to polar residues; sequence PQIQGQNNGNQS. A D-2 repeat occupies 745 to 782; that stretch reads GQNNGNQSFEEDTEKDKPKYEQGGNIIDIDFDSVPQIH. One copy of the D-3 repeat lies at 783 to 821; it reads GFNKHNEIIEEDTNKDKPNYQFGGHNSVDFEEDTLPKVS. A compositionally biased stretch (basic and acidic residues) spans 786–800; that stretch reads KHNEIIEEDTNKDKP. Residues 822-850 form a D-4; truncated repeat; sequence GQNEGQQTIEEDTTPPTPPTPEVPSEPET. Residues 836–910 are compositionally biased toward pro residues; sequence PPTPPTPEVP…PAEPGKPVPP (75 aa). 5 WR repeats span residues 851–864, 865–878, 879–892, 893–906, and 907–920; these read PTPP…EPET, PTPP…EPGK, and PVPP…KPSK. The tract at residues 851-920 is 5 X tandem repeats, Pro-rich (WR); that stretch reads PTPPTPEVPS…AEEEPKKPSK (70 aa). The LPXTG sorting signal motif lies at 954–958; sequence LPETG. Residue T957 is modified to Pentaglycyl murein peptidoglycan amidated threonine. The propeptide at 958-990 is removed by sortase; that stretch reads GGEESTNKGMLFGGLFSILGLALLRRNKKNHKA.

It localises to the secreted. The protein localises to the cell wall. Functionally, promotes bacterial attachment to multiple substrates, such as fibronectin (Fn), fibrinogen (Fg), elastin peptides and tropoelastin. This confers to S.aureus the ability to invade endothelial cells. Promotes adherence to and aggregation of activated platelets. In Staphylococcus aureus (strain bovine RF122 / ET3-1), this protein is Fibronectin-binding protein A (fnbA).